Consider the following 465-residue polypeptide: Gamma-aminobutyric acid receptor subunit gamma-1 (465 aa).

Residues 1 to 35 (MGPLKAFLFSPFLLRSQSRGVRLVFLLLTLHLGNC) form the signal peptide. Residues 36–273 (VDKADDEDDE…FDLSRRMGYF (238 aa)) lie on the Extracellular side of the membrane. N-linked (GlcNAc...) asparagine glycosylation is found at asparagine 50 and asparagine 127. The cysteines at positions 188 and 202 are disulfide-linked. N-linked (GlcNAc...) asparagine glycosylation occurs at asparagine 245. Residues 274 to 294 (TIQTYIPCILTVVLSWVSFWI) form a helical membrane-spanning segment. At 295-300 (NKDAVP) the chain is on the cytoplasmic side. The helical transmembrane segment at 301 to 320 (ARTSLGITTVLTMTTLSTIA) threads the bilayer. The Extracellular portion of the chain corresponds to 321–328 (RKSLPKVS). Residues 329–349 (YVTAMDLFVSVCFIFVFAALM) form a helical membrane-spanning segment. The Cytoplasmic portion of the chain corresponds to 350 to 444 (EYGTLHYFTS…RIAKIDSYSR (95 aa)). Residues 445-465 (IFFPTAFALFNLVYWVGYLYL) traverse the membrane as a helical segment.

Belongs to the ligand-gated ion channel (TC 1.A.9) family. Gamma-aminobutyric acid receptor (TC 1.A.9.5) subfamily. GABRG1 sub-subfamily. As to quaternary structure, heteropentamer, formed by a combination of alpha (GABRA1-6), beta (GABRB1-3), gamma (GABRG1-3), delta (GABRD), epsilon (GABRE), rho (GABRR1-3), pi (GABRP) and theta (GABRQ) chains, each subunit exhibiting distinct physiological and pharmacological properties. May be palmitoylated.

It localises to the postsynaptic cell membrane. Its subcellular location is the cell membrane. The enzyme catalyses chloride(in) = chloride(out). Gamma subunit of the heteropentameric ligand-gated chloride channel gated by gamma-aminobutyric acid (GABA), a major inhibitory neurotransmitter in the brain. GABA-gated chloride channels, also named GABA(A) receptors (GABAAR), consist of five subunits arranged around a central pore and contain GABA active binding site(s) located at the alpha and beta subunit interface(s). When activated by GABA, GABAARs selectively allow the flow of chloride anions across the cell membrane down their electrochemical gradient. Chloride influx into the postsynaptic neuron following GABAAR opening decreases the neuron ability to generate a new action potential, thereby reducing nerve transmission. The sequence is that of Gamma-aminobutyric acid receptor subunit gamma-1 from Homo sapiens (Human).